The chain runs to 333 residues: Biotin synthase (333 aa).

The Radical SAM core domain maps to 51-281 (HFGNQVSLCG…DVHITICGGR (231 aa)). Cysteine 69, cysteine 73, and cysteine 76 together coordinate [4Fe-4S] cluster. Cysteine 206 contacts [2Fe-2S] cluster.

The protein belongs to the radical SAM superfamily. Biotin synthase family. Homodimer. The cofactor is [4Fe-4S] cluster. It depends on [2Fe-2S] cluster as a cofactor.

It catalyses the reaction (4R,5S)-dethiobiotin + (sulfur carrier)-SH + 2 reduced [2Fe-2S]-[ferredoxin] + 2 S-adenosyl-L-methionine = (sulfur carrier)-H + biotin + 2 5'-deoxyadenosine + 2 L-methionine + 2 oxidized [2Fe-2S]-[ferredoxin]. It functions in the pathway cofactor biosynthesis; biotin biosynthesis; biotin from 7,8-diaminononanoate: step 2/2. Catalyzes the conversion of dethiobiotin (DTB) to biotin by the insertion of a sulfur atom into dethiobiotin via a radical-based mechanism. The polypeptide is Biotin synthase (Trichlorobacter lovleyi (strain ATCC BAA-1151 / DSM 17278 / SZ) (Geobacter lovleyi)).